Reading from the N-terminus, the 135-residue chain is Protein NrdI (135 aa).

Belongs to the NrdI family.

In terms of biological role, probably involved in ribonucleotide reductase function. The polypeptide is Protein NrdI (Brucella abortus (strain S19)).